The primary structure comprises 131 residues: Lymphocyte antigen 6E (131 aa).

A signal peptide spans 1–20; the sequence is MKIFLPVLLAALLGVERASS. In terms of domain architecture, UPAR/Ly6 spans 21 to 101; the sequence is LMCFSCLNQK…CCQSFLCNFS (81 aa). Disulfide bonds link Cys23–Cys48, Cys26–Cys35, Cys41–Cys71, Cys75–Cys92, and Cys93–Cys98. The N-linked (GlcNAc...) asparagine glycan is linked to Asn99. A lipid anchor (GPI-anchor amidated serine) is attached at Ser101. Residues 102–131 constitute a propeptide, removed in mature form; sequence AADGGLRASVTLLGAGLLLSLLPALLRFGP.

Interacts with CHRNA4. In terms of tissue distribution, widely expressed, predominantly in liver, kidney, ovary, spleen and peripheral blood Leukocytes.

It localises to the cell membrane. GPI-anchored cell surface protein that regulates T-lymphocytes proliferation, differentiation, and activation. Regulates the T-cell receptor (TCR) signaling by interacting with component CD3Z/CD247 at the plasma membrane, leading to CD3Z/CD247 phosphorylation modulation. Restricts the entry of human coronaviruses, including SARS-CoV, MERS-CoV and SARS-CoV-2, by interfering with spike protein-mediated membrane fusion. Also plays an essential role in placenta formation by acting as the main receptor for syncytin-A (SynA). Therefore, participates in the normal fusion of syncytiotrophoblast layer I (SynT-I) and in the proper morphogenesis of both fetal and maternal vasculatures within the placenta. May also act as a modulator of nicotinic acetylcholine receptors (nAChRs) activity. Functionally, (Microbial infection) Promotes entry, likely through an enhanced virus-cell fusion process, of various viruses including HIV-1, West Nile virus, dengue virus and Zika virus. In contrast, the paramyxovirus PIV5, which enters at the plasma membrane, does not require LY6E. Mechanistically, adopts a microtubule-like organization upon viral infection and enhances viral uncoating after endosomal escape. The protein is Lymphocyte antigen 6E of Homo sapiens (Human).